The primary structure comprises 288 residues: MILLALPNKGRISKPVNEILEKSGLKISVHGRSLFAKTVDPEIKVMFARAKDIPEFVRDGVADVGVTGYDLMLERDTEEELEMLLDFKFGNARLVLAAPENSDVNSIEDVKNGMKIATEFPGLTKRYLEKKGLNLEIIELSGATEIAPFIGVSDLICDLTSTGTTLQLNRLKEIENVVSSSTRLVANKKSMEDPEKSAKINQVLSGIKSVMYAQSKRLIMMNAPKDKVSEITSVIPGMGGPTVSEILSNCNMLAINAVIDENKVFETVSNLEKLGARDILVVPIERIL.

The protein belongs to the ATP phosphoribosyltransferase family. Long subfamily. The cofactor is Mg(2+).

The protein resides in the cytoplasm. It carries out the reaction 1-(5-phospho-beta-D-ribosyl)-ATP + diphosphate = 5-phospho-alpha-D-ribose 1-diphosphate + ATP. Its pathway is amino-acid biosynthesis; L-histidine biosynthesis; L-histidine from 5-phospho-alpha-D-ribose 1-diphosphate: step 1/9. Feedback inhibited by histidine. Catalyzes the condensation of ATP and 5-phosphoribose 1-diphosphate to form N'-(5'-phosphoribosyl)-ATP (PR-ATP). Has a crucial role in the pathway because the rate of histidine biosynthesis seems to be controlled primarily by regulation of HisG enzymatic activity. The chain is ATP phosphoribosyltransferase from Methanococcus maripaludis (strain DSM 14266 / JCM 13030 / NBRC 101832 / S2 / LL).